The following is a 314-amino-acid chain: Methionyl-tRNA formyltransferase (314 aa).

110–113 is a (6S)-5,6,7,8-tetrahydrofolate binding site; it reads SLLP.

Belongs to the Fmt family.

The enzyme catalyses L-methionyl-tRNA(fMet) + (6R)-10-formyltetrahydrofolate = N-formyl-L-methionyl-tRNA(fMet) + (6S)-5,6,7,8-tetrahydrofolate + H(+). Attaches a formyl group to the free amino group of methionyl-tRNA(fMet). The formyl group appears to play a dual role in the initiator identity of N-formylmethionyl-tRNA by promoting its recognition by IF2 and preventing the misappropriation of this tRNA by the elongation apparatus. The chain is Methionyl-tRNA formyltransferase from Bacillus cereus (strain AH187).